The primary structure comprises 59 residues: UPF0434 protein RHOS4_00640 (59 aa).

This sequence belongs to the UPF0434 family.

The protein is UPF0434 protein RHOS4_00640 of Cereibacter sphaeroides (strain ATCC 17023 / DSM 158 / JCM 6121 / CCUG 31486 / LMG 2827 / NBRC 12203 / NCIMB 8253 / ATH 2.4.1.) (Rhodobacter sphaeroides).